A 193-amino-acid chain; its full sequence is Ion-translocating oxidoreductase complex subunit A (193 aa).

6 consecutive transmembrane segments (helical) span residues 5–25 (ILFF…FLGL), 47–67 (FVIL…LLPL), 72–92 (LRII…EIVL), 102–122 (LLGI…IPLF), 134–154 (IFYG…FSCI), and 167–187 (FQGA…FMGF).

It belongs to the NqrDE/RnfAE family. The complex is composed of six subunits: RnfA, RnfB, RnfC, RnfD, RnfE and RnfG.

It is found in the cell inner membrane. Its function is as follows. Part of a membrane-bound complex that couples electron transfer with translocation of ions across the membrane. The chain is Ion-translocating oxidoreductase complex subunit A from Buchnera aphidicola subsp. Acyrthosiphon pisum (strain APS) (Acyrthosiphon pisum symbiotic bacterium).